A 492-amino-acid polypeptide reads, in one-letter code: DEAD-box ATP-dependent RNA helicase RhpA (492 aa).

The short motif at 20–48 (PSFNDLGLKESVLKSVYEAGFTSPSPIQE) is the Q motif element. The Helicase ATP-binding domain maps to 51–220 (IPAVLQGRDV…DKILENPIKI (170 aa)). 64 to 71 (AQTGTGKT) lines the ATP pocket. Residues 168-171 (DESD) carry the DEAD box motif. A Helicase C-terminal domain is found at 231-393 (DITQRFYVIN…EIPTINENQI (163 aa)). The tract at residues 445 to 492 (AIQNPKEKTPKPSHKKTPQHERARSFKKGQHRDRHPKTNHHSKKPKRR) is disordered. The span at 469–492 (SFKKGQHRDRHPKTNHHSKKPKRR) shows a compositional bias: basic residues.

This sequence belongs to the DEAD box helicase family. Homodimer. Interacts with RNase J (rnj), might be a member of a minimal RNA degradosome complex.

Its subcellular location is the cytoplasm. The catalysed reaction is ATP + H2O = ADP + phosphate + H(+). Functionally, DEAD-box RNA helicase probably involved in RNA degradation. Unwinds dsRNA in both 5'- and 3'-directions. Background RNA-dependent ATPase activity is stimulated about 5-fold by RNaseJ (rnj). Stimulates the dsRNase activity of RNase J. This is DEAD-box ATP-dependent RNA helicase RhpA (rhpA) from Helicobacter pylori (strain B128).